A 140-amino-acid chain; its full sequence is NADPH-dependent 7-cyano-7-deazaguanine reductase (140 aa).

Residue cysteine 51 is the Thioimide intermediate of the active site. Aspartate 58 (proton donor) is an active-site residue. Residues 73-75 (LES) and 92-93 (HE) contribute to the substrate site.

Belongs to the GTP cyclohydrolase I family. QueF type 1 subfamily.

It is found in the cytoplasm. The catalysed reaction is 7-aminomethyl-7-carbaguanine + 2 NADP(+) = 7-cyano-7-deazaguanine + 2 NADPH + 3 H(+). Its pathway is tRNA modification; tRNA-queuosine biosynthesis. In terms of biological role, catalyzes the NADPH-dependent reduction of 7-cyano-7-deazaguanine (preQ0) to 7-aminomethyl-7-deazaguanine (preQ1). This Syntrophus aciditrophicus (strain SB) protein is NADPH-dependent 7-cyano-7-deazaguanine reductase.